A 548-amino-acid polypeptide reads, in one-letter code: MASAAVGNYEEEIVRPVADFSPSLWGDHFLSFSIDNQVAEKYAQEIEPLKEQTRSMLLATGRKLADTLNLIDTIERLGISYYFEKEIDEILDHIYNQNSNCNDFCTSALQFRLLRQHGFNISPQIFSKFQDENGKFRESLASDVLGLLNLYEASHVRTHADDILEDALAFSTIHLESAAPHLKSPLREQVTHALEQCLHKGVPRVETRFFISSIYEKEQSKNNVLLRFAKLDFNLLQMLHKQELAEVSRWWKDLDFVTTLPYARDRVVECYFWALGVYFEPQYSQARVMLVKTISMISIVDDTFDAYGTVKELEAYTDAIQRWDINEIDRLPHYMKISYKAILDLYKDYEKELSSAEKSHIVCHAIERMKEVVGHYNVESTWFIEGYMPPVSEYLSNALATTTYYYLATTSYLGMKSATEQDFEWLSKNPKILEASVIICRVIDDTATYEVEKSRGQIATGIECCMRDYGISTKKAMAKFQKMAETAWKDINEGLLRPTPVSTEFLTLILNLARIVEVTYIHNLDGYTHPEKVLKPHIINLLVDSIKI.

Mg(2+)-binding residues include Asp301, Asp305, Asp444, Thr448, and Glu452. Positions 301 to 305 (DDTFD) match the DDXXD motif motif.

The protein belongs to the terpene synthase family. Monomer. It depends on Mg(2+) as a cofactor. As to expression, expressed in roots, but not in shoots.

Its subcellular location is the cytoplasm. The enzyme catalyses (2E,6E)-farnesyl diphosphate = (+)-5-epi-aristolochene + diphosphate. The protein operates within secondary metabolite biosynthesis; terpenoid biosynthesis. Catalyzes the cyclization of trans,trans-farnesyl diphosphate (FPP) to the bicyclic intermediate 5-epi-aristolochene, initial step in the conversion of FPP to the sesquiterpenoid antifungal phytoalexin capsidiol. Produces germacrene A as an enzyme-bound intermediate that is not released by the enzyme, but is further cyclized to produce the bicyclic 5-epi-aristolochene. This is 5-epi-aristolochene synthase 1 (EAS) from Nicotiana attenuata (Coyote tobacco).